The following is a 268-amino-acid chain: Embryonic abundant protein USP92 (268 aa).

A signal peptide spans 1–22 (MEFAHLTVLSLFCLAFVGITAT). Repeat copies occupy residues 50-55 (GKTNSL), 83-88 (GNTNSV), 101-106 (GVTDSI), 166-183 (YVVE…MCHR), and 202-222 (YVVS…VCHH). The interval 50–106 (GKTNSLPIKSEELKQYSTLFFEHDLHPRKNFILGNTNSVGSIIRPFTKSRQGVTDSI) is 3 X 6 AA approximate repeats. The 192-residue stretch at 68–259 (LFFEHDLHPR…GNKAAAWVPN (192 aa)) folds into the BURP domain. The tract at residues 166-222 (YVVEDVKKVGDNAVMCHRLNFEKVVFNCHQVRETTAYVVSLVASDGTKTKALTVCHH) is 2 X approximate repeats. Asparagine 259 carries N-linked (GlcNAc...) asparagine glycosylation.

In terms of tissue distribution, seed.

This chain is Embryonic abundant protein USP92, found in Vicia faba (Broad bean).